A 514-amino-acid chain; its full sequence is ATP synthase subunit alpha (514 aa).

Residue 170 to 177 participates in ATP binding; sequence GDRQIGKT.

Belongs to the ATPase alpha/beta chains family. F-type ATPases have 2 components, CF(1) - the catalytic core - and CF(0) - the membrane proton channel. CF(1) has five subunits: alpha(3), beta(3), gamma(1), delta(1), epsilon(1). CF(0) has three main subunits: a(1), b(2) and c(9-12). The alpha and beta chains form an alternating ring which encloses part of the gamma chain. CF(1) is attached to CF(0) by a central stalk formed by the gamma and epsilon chains, while a peripheral stalk is formed by the delta and b chains.

It localises to the cell inner membrane. It carries out the reaction ATP + H2O + 4 H(+)(in) = ADP + phosphate + 5 H(+)(out). Functionally, produces ATP from ADP in the presence of a proton gradient across the membrane. The alpha chain is a regulatory subunit. The protein is ATP synthase subunit alpha of Pseudomonas aeruginosa (strain LESB58).